The following is a 124-amino-acid chain: uncharacterized protein (124 aa).

Its subcellular location is the cytoplasm. It is found in the nucleus. This is an uncharacterized protein from Schizosaccharomyces pombe (strain 972 / ATCC 24843) (Fission yeast).